Here is a 362-residue protein sequence, read N- to C-terminus: MYVKELFVDNFRNLQKQKIEFCEGINIFYGLNAQGKSNLLESIRLLSMGRSFRGSKTTELIKFGEDYFYVKAIICQENNDKKIEFGYKKNENKVIKVNGNKIKSTSELLGQLLTVIFSPEDLNIIKEGPSHRRKYLDSCISVVEKNYLYNLMQYNKILMNRNKLLKSIKEGKSKSILEIFDDQLVEYGAKIIVMRQNYLKNVEINIKKFLLEISNETAEIVYLNSVGLKDASDEEIVKKRLKEKLSKNIDVDLRYFTTQVGPHREDFKIIINGYDSRVYSSQGQQRTAALCLKLSEFEILKKETSEKPVLLLDDVMSELDENRKKYVLERLKGFQTFITHTTKRYLKGDCYFKISNGVVIKE.

30–37 (GLNAQGKS) provides a ligand contact to ATP.

It belongs to the RecF family.

Its subcellular location is the cytoplasm. Functionally, the RecF protein is involved in DNA metabolism; it is required for DNA replication and normal SOS inducibility. RecF binds preferentially to single-stranded, linear DNA. It also seems to bind ATP. This is DNA replication and repair protein RecF from Thermoanaerobacter pseudethanolicus (strain ATCC 33223 / 39E) (Clostridium thermohydrosulfuricum).